We begin with the raw amino-acid sequence, 37 residues long: NYCYYMVDYLTFYNIKNYKIYTYAQRLLEIYFSYLSI.

In Plasmodium chabaudi, this protein is 24 kDa antigen.